The primary structure comprises 486 residues: Glutamyl-tRNA(Gln) amidotransferase subunit A (486 aa).

Active-site charge relay system residues include Lys79 and Ser154. Ser178 functions as the Acyl-ester intermediate in the catalytic mechanism.

It belongs to the amidase family. GatA subfamily. Heterotrimer of A, B and C subunits.

The enzyme catalyses L-glutamyl-tRNA(Gln) + L-glutamine + ATP + H2O = L-glutaminyl-tRNA(Gln) + L-glutamate + ADP + phosphate + H(+). Its function is as follows. Allows the formation of correctly charged Gln-tRNA(Gln) through the transamidation of misacylated Glu-tRNA(Gln) in organisms which lack glutaminyl-tRNA synthetase. The reaction takes place in the presence of glutamine and ATP through an activated gamma-phospho-Glu-tRNA(Gln). This chain is Glutamyl-tRNA(Gln) amidotransferase subunit A, found in Dehalococcoides mccartyi (strain ATCC BAA-2266 / KCTC 15142 / 195) (Dehalococcoides ethenogenes (strain 195)).